We begin with the raw amino-acid sequence, 343 residues long: Mitotic checkpoint protein bub-3 (343 aa).

WD repeat units follow at residues P21–E62, T67–L105, S107–I146, N150–Q187, P192–K232, E249–Q288, and K291–T331. The disordered stretch occupies residues P322–K343. A compositionally biased stretch (basic and acidic residues) spans H334–K343.

It belongs to the WD repeat BUB3 family. As to quaternary structure, may interact with bub-1; for localization at the kinetochore and the onset of anaphase.

It is found in the chromosome. The protein localises to the centromere. It localises to the kinetochore. The protein resides in the nucleus. Its function is as follows. Has a dual function in spindle-assembly checkpoint signaling and in promoting the establishment of correct kinetochore-microtubule (K-MT) attachments. Promotes the formation of stable end-on bipolar attachments of chromosomes. Necessary for expression and kinetochore localization of bub-1. Plays a role in synapsis checkpoint signaling inducing apoptosis in response to unsynapsed chromosomes and thus controlling chromosomal segregation during oocyte meiosis. This is Mitotic checkpoint protein bub-3 from Caenorhabditis elegans.